Here is a 141-residue protein sequence, read N- to C-terminus: MLSASDKANVKAIWSKVCVHAEEYGAETLERMFTVYPSTKTYFPHFDLTHGSAQVKAHGKKVVNAMGEAVNHLDDMAGALLKLSDLHAQKLRVDPVNFKLLAQCFLVVLGVHHPAALTPEVHASLDKFLCAVGLVLTAKYR.

The Globin domain occupies 1–141 (MLSASDKANV…VGLVLTAKYR (141 aa)). Position 58 (His58) interacts with O2. His87 contacts heme b.

Belongs to the globin family. There are three forms of hemoglobin in Sphenodon: A, A' and D. Hb A is a tetramer of two alpha-A and two beta-1, Hb A' is a tetramer of two alpha-a and two beta-2, Hb D is a tetramer of two alpha-D and two beta-2. As to expression, red blood cells.

Functionally, involved in oxygen transport from the lung to the various peripheral tissues. This Sphenodon punctatus (Tuatara) protein is Hemoglobin subunit alpha-A (HBAA).